Consider the following 392-residue polypeptide: DNA primase small subunit PriS (392 aa).

Catalysis depends on residues Asp-98, Asp-100, and Asp-295.

Belongs to the eukaryotic-type primase small subunit family. Heterodimer of a small subunit (PriS) and a large subunit (PriL). Mg(2+) serves as cofactor. It depends on Mn(2+) as a cofactor.

In terms of biological role, catalytic subunit of DNA primase, an RNA polymerase that catalyzes the synthesis of short RNA molecules used as primers for DNA polymerase during DNA replication. The small subunit contains the primase catalytic core and has DNA synthesis activity on its own. Binding to the large subunit stabilizes and modulates the activity, increasing the rate of DNA synthesis while decreasing the length of the DNA fragments, and conferring RNA synthesis capability. The DNA polymerase activity may enable DNA primase to also catalyze primer extension after primer synthesis. May also play a role in DNA repair. The chain is DNA primase small subunit PriS from Haloarcula marismortui (strain ATCC 43049 / DSM 3752 / JCM 8966 / VKM B-1809) (Halobacterium marismortui).